The chain runs to 822 residues: ATP-dependent zinc metalloprotease FTSH 8, mitochondrial (822 aa).

A compositionally biased stretch (low complexity) spans 1-25; the sequence is MSLASLARALSRRSAPSSSRARQGF. Disordered stretches follow at residues 1-50, 103-131, and 202-221; these read MSLA…LHGG, NYYP…STDD, and SSPQ…TTND. The transit peptide at 1-93 directs the protein to the mitochondrion; the sequence is MSLASLARAL…LANPQFRRLF (93 aa). Over residues 108–127 the composition is skewed to basic and acidic residues; sequence GKKEAPKGDGSNKSDSKQDS. Residue 375–382 coordinates ATP; it reads GPPGTGKT. Histidine 600 lines the Zn(2+) pocket. Residue glutamate 601 is part of the active site. Positions 604 and 676 each coordinate Zn(2+). Positions 781-822 are disordered; the sequence is PTNYDLFKQGFQDEEDSKNQEAAKTPQPDDDGTPSLGEVVPT.

This sequence in the N-terminal section; belongs to the AAA ATPase family. The protein in the C-terminal section; belongs to the peptidase M41 family. Zn(2+) is required as a cofactor.

It is found in the mitochondrion. Functionally, probable ATP-dependent zinc metallopeptidase. This is ATP-dependent zinc metalloprotease FTSH 8, mitochondrial (FTSH8) from Oryza sativa subsp. japonica (Rice).